We begin with the raw amino-acid sequence, 232 residues long: Rhamnogalacturonan acetylesterase RhgT (232 aa).

Catalysis depends on serine 14, which acts as the Nucleophile. Catalysis depends on residues glutamate 191 and histidine 195.

The protein belongs to the 'GDSL' lipolytic enzyme family. As to quaternary structure, monomer.

With respect to regulation, almost completely inhibited by diethylpyrocarbonate at 5 mM and completely inhibited by phenylmethylsulfonyl fluoride (PMSF) at 50 mM. Dimethyl phosphite achieves only a 53% inhibition. Also inhibited by metal ions (magnesium, manganese and calcium) and chelating agent (EDTA) at the same level. May play a role in the degradation of type I rhamnogalacturonan derived from plant cell walls. This enzyme has a broad substrate specificity, and shows strong preference for glucose pentaacetate, beta-naphthylacetate, and p-nitrophenyl acetate (pNPA). Also active toward acetylated xylan. In Bacillus subtilis (strain 168), this protein is Rhamnogalacturonan acetylesterase RhgT (rhgT).